Consider the following 125-residue polypeptide: Small ribosomal subunit protein uS11 (125 aa).

This sequence belongs to the universal ribosomal protein uS11 family. In terms of assembly, part of the 30S ribosomal subunit. Interacts with proteins S7 and S18. Binds to IF-3.

Its function is as follows. Located on the platform of the 30S subunit, it bridges several disparate RNA helices of the 16S rRNA. Forms part of the Shine-Dalgarno cleft in the 70S ribosome. The polypeptide is Small ribosomal subunit protein uS11 (Coprothermobacter proteolyticus (strain ATCC 35245 / DSM 5265 / OCM 4 / BT)).